We begin with the raw amino-acid sequence, 688 residues long: Putative proline--tRNA ligase YHR020W (688 aa).

Ser149 is modified (phosphoserine). Thr170 is modified (phosphothreonine). Residues 631–650 (ESSAKKDDGEEFEEDDKAPS) form a disordered region. Ser655 carries the phosphoserine modification.

It belongs to the class-II aminoacyl-tRNA synthetase family.

The catalysed reaction is tRNA(Pro) + L-proline + ATP = L-prolyl-tRNA(Pro) + AMP + diphosphate. The chain is Putative proline--tRNA ligase YHR020W from Saccharomyces cerevisiae (strain ATCC 204508 / S288c) (Baker's yeast).